A 752-amino-acid chain; its full sequence is THO complex subunit HPR1 (752 aa).

At serine 234 the chain carries Phosphoserine. The segment at 648-752 (RKKRALEEEA…SNGSSTQDMK (105 aa)) is disordered. Basic and acidic residues predominate over residues 692–702 (EISEENTKIKS). Positions 720–752 (PQNTTAQLENPKTEDNNAATSNISNGSSTQDMK) are enriched in polar residues.

Component of the THO complex, which is composed of HPR1, MFT1, THO2 and THP2. Together with SUB2, TEX1 and YRA1, THO forms the transcription/export (TREX) complex. THO associates with DNA and RNA in vitro.

It localises to the nucleus. Component the THO subcomplex of the TREX complex, which operates in coupling transcription elongation to mRNA export. The THO complex is recruited to transcribed genes and moves along the gene with the elongating polymerase during transcription. THO is important for stabilizing nascent RNA in the RNA polymerase II elongation complex by preventing formation of DNA:RNA hybrids behind the elongating polymerase. It functions in cotranscriptional formation of an export-competent messenger ribonucleoprotein particle (mRNP) by facilitating the loading of ATP-dependent RNA helicase SUB2 and the mRNA export factor YRA1 along the nascent mRNA. The polypeptide is THO complex subunit HPR1 (HPR1) (Saccharomyces cerevisiae (strain ATCC 204508 / S288c) (Baker's yeast)).